The sequence spans 67 residues: COP9 signalosome complex subunit 9 homolog (67 aa).

The disordered stretch occupies residues 1 to 31 (MKPSLAADEMFSEGPGYMEMDESGGATGMMM).

Belongs to the CSN9 family. Probable component of the COP9 signalosome (CSN) complex.

In terms of biological role, component of the COP9 signalosome complex (CSN), a complex involved in various cellular and developmental processes. The CSN complex is an essential regulator of the ubiquitin (Ubl) conjugation pathway by mediating the deneddylation of the cullin subunits of SCF-type E3 ligase complexes, leading to decrease the Ubl ligase activity. This Drosophila melanogaster (Fruit fly) protein is COP9 signalosome complex subunit 9 homolog.